A 431-amino-acid chain; its full sequence is Enolase (431 aa).

Residue glutamine 166 coordinates (2R)-2-phosphoglycerate. Residue glutamate 208 is the Proton donor of the active site. 3 residues coordinate Mg(2+): aspartate 245, glutamate 288, and aspartate 315. 4 residues coordinate (2R)-2-phosphoglycerate: lysine 340, arginine 369, serine 370, and lysine 391. The active-site Proton acceptor is lysine 340.

It belongs to the enolase family. It depends on Mg(2+) as a cofactor.

It localises to the cytoplasm. The protein localises to the secreted. It is found in the cell surface. The catalysed reaction is (2R)-2-phosphoglycerate = phosphoenolpyruvate + H2O. Its pathway is carbohydrate degradation; glycolysis; pyruvate from D-glyceraldehyde 3-phosphate: step 4/5. Its function is as follows. Catalyzes the reversible conversion of 2-phosphoglycerate (2-PG) into phosphoenolpyruvate (PEP). It is essential for the degradation of carbohydrates via glycolysis. This chain is Enolase, found in Clostridium botulinum (strain Kyoto / Type A2).